The primary structure comprises 372 residues: MYYLCIFLWVTSVACQTSKEIYQLLSKSHTNQNLVVSPVSIETILSMVFMGAEGSTAKELQSALGLPSEDKEAVAARYGALLNDLQGQEEGPILKLANRIYVNDQYSLNQNYNLAVREPFKSEAESISLTNGPVAAERINQWVLDQTSGKIKGMIDPGSMTSDVKALLVNAIYFKGQWESKFDPAKTRASTFQVTANKSVPVQMMAQMGTFRANYFRDLDAQVIELPYLNSNLSMTIFLPREVEGLSALEEKIVGFARPLVAKEVYLKLPKFKIEFRDELKETLEKLGIRELFTDKSDLSGLFADKSGGKVSQVSHKAFLEVNEEGAEAAGATSVAVTNRAGFSTFLMADHPFAFVIRDANTIYFQGRVVSP.

An N-terminal signal peptide occupies residues 1 to 15 (MYYLCIFLWVTSVAC). N-linked (GlcNAc...) asparagine glycans are attached at residues asparagine 197 and asparagine 232.

Belongs to the serpin family. In terms of tissue distribution, expressed in the ovary.

It localises to the secreted. In terms of biological role, serine protease inhibitor with activity toward trypsin. Involved in innate immunity to fungal infection by negatively regulating the Toll signaling pathway and suppressing the expression of the antifungal peptide drosomycin. Acts upstream of SPE and grass, and downstream of the fungal cell wall pattern recognition receptor GNBP3. May function specifically in the GNBP3-dependent beta-1,3-glucan branch of the Toll pathway. The protein is Serine protease inhibitor 42Dd of Drosophila melanogaster (Fruit fly).